The chain runs to 825 residues: Phenylalanine--tRNA ligase beta subunit (825 aa).

Residues arginine 39 to arginine 154 form the tRNA-binding domain. Residues proline 411–glutamate 506 form the B5 domain. Mg(2+) contacts are provided by aspartate 484, aspartate 490, glutamate 493, and glutamate 494. The 94-residue stretch at serine 731–arginine 824 folds into the FDX-ACB domain.

The protein belongs to the phenylalanyl-tRNA synthetase beta subunit family. Type 1 subfamily. In terms of assembly, tetramer of two alpha and two beta subunits. It depends on Mg(2+) as a cofactor.

It is found in the cytoplasm. The enzyme catalyses tRNA(Phe) + L-phenylalanine + ATP = L-phenylalanyl-tRNA(Phe) + AMP + diphosphate + H(+). The chain is Phenylalanine--tRNA ligase beta subunit from Synechococcus sp. (strain JA-2-3B'a(2-13)) (Cyanobacteria bacterium Yellowstone B-Prime).